The chain runs to 315 residues: Adenine deaminase (315 aa).

Residues His-14, His-16, and His-194 each coordinate Zn(2+). The Proton donor role is filled by Glu-197. Position 275 (Asp-275) interacts with Zn(2+). Asp-276 serves as a coordination point for substrate.

Belongs to the metallo-dependent hydrolases superfamily. Adenosine and AMP deaminases family. Adenine deaminase type 2 subfamily. The cofactor is Zn(2+).

The enzyme catalyses adenine + H2O + H(+) = hypoxanthine + NH4(+). Functionally, catalyzes the hydrolytic deamination of adenine to hypoxanthine. Plays an important role in the purine salvage pathway and in nitrogen catabolism. The chain is Adenine deaminase from Pseudomonas putida (strain ATCC 47054 / DSM 6125 / CFBP 8728 / NCIMB 11950 / KT2440).